The primary structure comprises 98 residues: Large ribosomal subunit protein uL23 (98 aa).

This sequence belongs to the universal ribosomal protein uL23 family. Part of the 50S ribosomal subunit. Contacts protein L29, and trigger factor when it is bound to the ribosome.

Its function is as follows. One of the early assembly proteins it binds 23S rRNA. One of the proteins that surrounds the polypeptide exit tunnel on the outside of the ribosome. Forms the main docking site for trigger factor binding to the ribosome. This Roseobacter denitrificans (strain ATCC 33942 / OCh 114) (Erythrobacter sp. (strain OCh 114)) protein is Large ribosomal subunit protein uL23.